An 844-amino-acid polypeptide reads, in one-letter code: MAIEKLSPGMQQYVDIKKQYPDAFLLFRMGDFYELFYEDAVNAAQILEISLTSRNKNADNPIPMAGVPYHSAQQYIDVLIEQGYKVAIAEQMEDPKQAVGVVKREVVQVITPGTVVDSSKPDSQNNFLVSIDREGNQFGLAYMDLVTGDFYVTGLLDFTLVCGEIRNLKAREVVLGYDLSEEEEQILSRQMNLVLSYEKESFEDLHLLDLRLATVEQTASSKLLQYVHRTQMRELNHLKPVIRYEIKDFLQMDYATKASLDLVENARSGKKQGSLFWLLDETKTAMGMRLLRSWIHRPLIDKERIVQRQEVVQVFLDHFFERSDLTDSLKGVYDIERLASRVSFGKTNPKDLLQLATTLSSVPRIRAILEGMEQPTLAYLIAQLDAIPELESLISAAIAPEAPHVITDGGIIRTGFDETLDKYXCVXREGTSWIAEIEAKERENSGISTLKIDYNKKDGYYFHVTNSQLGNVPAHFFRKATLKNSERFGTEELARIEGDMLEAREKSANLEYEIFMRIREEVGKYIQRLQALAQGIATVDVLQSLAVVAETQHLIRPEFGDDSQIDIRKGRHAVVEKVMGAQTYIPNTIQMAEDTSIQLITGPNMSGKSTYMRQLAMTAVMAQLGSYVPAESAHLPIFDAIFTRIGAADDLVSGQSTFMVEMMEANNAISHATKNSLILFDELGRGTATYDGMALAQSIIEYIHEHIGAKTLFATHYHELTSLESSLQHLVNVHVATLEQDGQVTFLHKIEPGPADKSXGIHVAKIAGLPADLLARADKILXQLENQGTESPPPMRQTSAVTEHISLFDRAEEHPILAELAKLDVYNMTPMQVMNVLVELKQKL.

An ATP-binding site is contributed by 602-609 (GPNMSGKS).

It belongs to the DNA mismatch repair MutS family.

This protein is involved in the repair of mismatches in DNA. It is possible that it carries out the mismatch recognition step. This protein has a weak ATPase activity. The polypeptide is DNA mismatch repair protein MutS (Streptococcus pneumoniae serotype 19F (strain G54)).